Here is a 142-residue protein sequence, read N- to C-terminus: Large ribosomal subunit protein uL13 (142 aa).

It belongs to the universal ribosomal protein uL13 family. In terms of assembly, part of the 50S ribosomal subunit.

Functionally, this protein is one of the early assembly proteins of the 50S ribosomal subunit, although it is not seen to bind rRNA by itself. It is important during the early stages of 50S assembly. The chain is Large ribosomal subunit protein uL13 from Methanosphaera stadtmanae (strain ATCC 43021 / DSM 3091 / JCM 11832 / MCB-3).